The sequence spans 305 residues: Protoheme IX farnesyltransferase (305 aa).

The next 9 helical transmembrane spans lie at 31–51, 53–73, 98–118, 124–144, 153–173, 181–201, 221–241, 242–262, and 285–305; these read IQVL…KGHV, PLLL…ANAF, ILPW…FAVL, LFAA…YTLW, IVIG…AVTG, VLFG…AMMI, ATAR…LVLY, PLGT…LWLI, and SIFY…FLFA.

Belongs to the UbiA prenyltransferase family. Protoheme IX farnesyltransferase subfamily.

The protein resides in the cell inner membrane. It carries out the reaction heme b + (2E,6E)-farnesyl diphosphate + H2O = Fe(II)-heme o + diphosphate. It participates in porphyrin-containing compound metabolism; heme O biosynthesis; heme O from protoheme: step 1/1. Its function is as follows. Converts heme B (protoheme IX) to heme O by substitution of the vinyl group on carbon 2 of heme B porphyrin ring with a hydroxyethyl farnesyl side group. This Gloeobacter violaceus (strain ATCC 29082 / PCC 7421) protein is Protoheme IX farnesyltransferase.